A 344-amino-acid polypeptide reads, in one-letter code: Ion-translocating oxidoreductase complex subunit D (344 aa).

4 helical membrane passes run 23 to 43 (LVLG…GAGT), 44 to 64 (LLNL…MLAL), 80 to 100 (VTAL…LTLV), and 120 to 140 (PFNP…LEMT). Threonine 172 is modified (FMN phosphoryl threonine). 5 helical membrane-spanning segments follow: residues 198–218 (LGGA…LFLL), 222–242 (LFTW…SLLF), 252–272 (GSPL…FIVT), 285–305 (LLFG…GGYP), and 306–326 (DGVA…DYYT).

Belongs to the NqrB/RnfD family. As to quaternary structure, the complex is composed of six subunits: RnfA, RnfB, RnfC, RnfD, RnfE and RnfG. Requires FMN as cofactor.

It localises to the cell inner membrane. Functionally, part of a membrane-bound complex that couples electron transfer with translocation of ions across the membrane. The polypeptide is Ion-translocating oxidoreductase complex subunit D (Pseudomonas paraeruginosa (strain DSM 24068 / PA7) (Pseudomonas aeruginosa (strain PA7))).